The following is a 311-amino-acid chain: MKWSEISIHTTHEAVEPISNILHEAGASGVVIEDPLDLMKERENVYGEIYQLDPNDYPDEGVIVKAYLPINSFLGETVDGIKETINNLLLYDIDLGRNTITISEVNEEEWATAWKKYYHPVKISEKFTIVPTWETYTPVHTDELIIEMDPGMAFGTGTHPTTVLCIQALERIVQKGDRVIDVGTGSGILSIAAAMLEAESVHAYDLDPVAVESARLNVKLNKVSDTAEVKQNNLLDGITGEHDVIVANILAEVILRFTSQAYDLLKDGGHFITSGIIGQKKQEVKEALEKAGFTIIEILSMEDWVSIIAKK.

Residues T162, G183, D205, and N248 each coordinate S-adenosyl-L-methionine.

It belongs to the methyltransferase superfamily. PrmA family.

It localises to the cytoplasm. It carries out the reaction L-lysyl-[protein] + 3 S-adenosyl-L-methionine = N(6),N(6),N(6)-trimethyl-L-lysyl-[protein] + 3 S-adenosyl-L-homocysteine + 3 H(+). In terms of biological role, methylates ribosomal protein L11. The sequence is that of Ribosomal protein L11 methyltransferase from Bacillus velezensis (strain DSM 23117 / BGSC 10A6 / LMG 26770 / FZB42) (Bacillus amyloliquefaciens subsp. plantarum).